Here is a 238-residue protein sequence, read N- to C-terminus: Probable transcriptional regulatory protein SERP0322 (238 aa).

It belongs to the TACO1 family. YeeN subfamily.

The protein localises to the cytoplasm. This chain is Probable transcriptional regulatory protein SERP0322, found in Staphylococcus epidermidis (strain ATCC 35984 / DSM 28319 / BCRC 17069 / CCUG 31568 / BM 3577 / RP62A).